A 333-amino-acid polypeptide reads, in one-letter code: (2R)-3-sulfolactate dehydrogenase (NADP(+)) (333 aa).

Belongs to the LDH2/MDH2 oxidoreductase family.

It carries out the reaction (2R)-3-sulfolactate + NADP(+) = 3-sulfopyruvate + NADPH + H(+). In terms of biological role, catalyzes the reduction of sulfopyruvate to (R)-sulfolactate. Together with SlcC, provides a racemase system that converts (2S)-3-sulfolactate to (2R)-3-sulfolactate, which is degraded further by (2R)-sulfolactate sulfo-lyase. This Chromohalobacter salexigens (strain ATCC BAA-138 / DSM 3043 / CIP 106854 / NCIMB 13768 / 1H11) protein is (2R)-3-sulfolactate dehydrogenase (NADP(+)) (comC).